Here is a 191-residue protein sequence, read N- to C-terminus: Protein adenylyltransferase NmFic (191 aa).

Residues 37–162 (GTTAGLQQIH…NDLELRFLLK (126 aa)) form the Fido domain. ATP contacts are provided by residues K67, 104 to 107 (NIAH), 112 to 118 (GNGRSTR), and 140 to 143 (KTLY). The Inhibitory (S/T)XXXE(G/N) motif motif lies at 182–187 (SYYYEG). Y183 carries the post-translational modification O-AMP-tyrosine; in vitro. E186 provides a ligand contact to ATP.

Homodimer. In terms of processing, auto-AMPylation at Tyr-183 in vitro.

The catalysed reaction is L-tyrosyl-[protein] + ATP = O-(5'-adenylyl)-L-tyrosyl-[protein] + diphosphate. It carries out the reaction L-threonyl-[protein] + ATP = 3-O-(5'-adenylyl)-L-threonyl-[protein] + diphosphate. Adenylyltransferase activity is inhibited by the inhibitory helix present at the C-terminus: Glu-186 binds ATP and competes with ATP-binding at Arg-118, thereby preventing adenylyltransferase activity. Activation dissociates ATP-binding from Glu-186, allowing ordered binding of the entire ATP moiety with the alpha-phosphate in an orientation that is productive for accepting an incoming target hydroxyl side chain. In terms of biological role, adenylyltransferase that mediates the addition of adenosine 5'-monophosphate (AMP) to specific residues of target proteins. This chain is Protein adenylyltransferase NmFic, found in Neisseria meningitidis serogroup B (strain ATCC BAA-335 / MC58).